A 248-amino-acid polypeptide reads, in one-letter code: uncharacterized protein (248 aa).

Residue Glu-8 to Leu-32 coordinates NADP(+). Residue Ser-134 coordinates substrate. The Proton acceptor role is filled by Tyr-147.

Belongs to the short-chain dehydrogenases/reductases (SDR) family.

This is an uncharacterized protein from Sinorhizobium fredii (strain NBRC 101917 / NGR234).